A 485-amino-acid polypeptide reads, in one-letter code: MKFIVKLFPEIMMKSKPVRMRFTKMLETNIRNVLRKVDEEARVQRQWDKIMVRVPEDKPEMIERYAERLACIPGIAHVLQVRESTFESVDDIYQQTLALYKEELAGKTFCVRVKRSGKHEFNSIEVERYVGGGLNQFTEAAGVRLKNPDMTVNLEIDNEHLYLVEKRIDGLGGFPMATQEDVLSLISGGFDSGVSSFQFIKRGSRTHYCFFNLGGDQHEIGVKQVAYHLWQKYGESHKVKFISVPFDPVVQEILEKIDNGQMGVILKRMMMRAASRIAEKMGIQALVTGEAMGQVSSQTLTNLNVIDRSTDMLILRPLIVMDKQDIINMSREIGTEDFAKSIPEYCGVISQKPTVKAVMGKILAEEEKFSEDLIDRVVEAAEVIDIRDIAVSMDTKITETETVDAVSGGEVVVDIRSPEEEEQSPLSLNGIEVKCIPFFKLATQFADLDKEKTYLLYCDRGVMSKLQALYLQEQGYHNVKVYRPA.

One can recognise a THUMP domain in the interval Glu-63–Arg-167. ATP is bound by residues Leu-185 to Ile-186, Lys-267, Gly-289, and Gln-298. Cys-346 and Cys-458 form a disulfide bridge. Positions Val-406–Pro-484 constitute a Rhodanese domain. Cys-458 serves as the catalytic Cysteine persulfide intermediate.

It belongs to the ThiI family.

The protein resides in the cytoplasm. The catalysed reaction is [ThiI sulfur-carrier protein]-S-sulfanyl-L-cysteine + a uridine in tRNA + 2 reduced [2Fe-2S]-[ferredoxin] + ATP + H(+) = [ThiI sulfur-carrier protein]-L-cysteine + a 4-thiouridine in tRNA + 2 oxidized [2Fe-2S]-[ferredoxin] + AMP + diphosphate. It carries out the reaction [ThiS sulfur-carrier protein]-C-terminal Gly-Gly-AMP + S-sulfanyl-L-cysteinyl-[cysteine desulfurase] + AH2 = [ThiS sulfur-carrier protein]-C-terminal-Gly-aminoethanethioate + L-cysteinyl-[cysteine desulfurase] + A + AMP + 2 H(+). The protein operates within cofactor biosynthesis; thiamine diphosphate biosynthesis. Catalyzes the ATP-dependent transfer of a sulfur to tRNA to produce 4-thiouridine in position 8 of tRNAs, which functions as a near-UV photosensor. Also catalyzes the transfer of sulfur to the sulfur carrier protein ThiS, forming ThiS-thiocarboxylate. This is a step in the synthesis of thiazole, in the thiamine biosynthesis pathway. The sulfur is donated as persulfide by IscS. The chain is tRNA sulfurtransferase from Shewanella loihica (strain ATCC BAA-1088 / PV-4).